The following is a 438-amino-acid chain: SPbeta prophage-derived uncharacterized protein YopA (438 aa).

A helical transmembrane segment spans residues 391 to 411 (LHVLYLGVWYLELLTLGILGY).

Its subcellular location is the cell membrane. The chain is SPbeta prophage-derived uncharacterized protein YopA (yopA) from Bacillus subtilis (strain 168).